The following is a 135-amino-acid chain: Large ribosomal subunit protein bL19 (135 aa).

Belongs to the bacterial ribosomal protein bL19 family.

Functionally, this protein is located at the 30S-50S ribosomal subunit interface and may play a role in the structure and function of the aminoacyl-tRNA binding site. This Xanthomonas euvesicatoria pv. vesicatoria (strain 85-10) (Xanthomonas campestris pv. vesicatoria) protein is Large ribosomal subunit protein bL19.